Here is a 50-residue protein sequence, read N- to C-terminus: Sperm protamine P1 (50 aa).

2 disulfides stabilise this stretch: Cys-7-Cys-15 and Cys-39-Cys-47.

Belongs to the protamine P1 family. In terms of assembly, cross-linked by interchain disulfide bonds around the DNA-helix. Testis.

It localises to the nucleus. The protein localises to the chromosome. In terms of biological role, protamines substitute for histones in the chromatin of sperm during the haploid phase of spermatogenesis. They compact sperm DNA into a highly condensed, stable and inactive complex. The protein is Sperm protamine P1 (PRM1) of Sus scrofa (Pig).